Consider the following 393-residue polypeptide: Na(+)/H(+) antiporter NhaA 2 (393 aa).

11 helical membrane passes run 18–38, 53–73, 91–111, 120–140, 149–169, 172–192, 208–228, 263–283, 294–314, 332–352, and 363–383; these read SGGL…NSQL, LSVQ…MVGL, ILPG…YLAF, GWAI…SLLG, VFLA…IGLF, TGVS…LVAL, LVLW…GVLL, FIIV…GLGM, VAAG…LLLV, GTTL…LLAF, and IGIL…LRFS.

The protein belongs to the NhaA Na(+)/H(+) (TC 2.A.33) antiporter family.

The protein resides in the cell inner membrane. The catalysed reaction is Na(+)(in) + 2 H(+)(out) = Na(+)(out) + 2 H(+)(in). Functionally, na(+)/H(+) antiporter that extrudes sodium in exchange for external protons. The chain is Na(+)/H(+) antiporter NhaA 2 from Brucella anthropi (strain ATCC 49188 / DSM 6882 / CCUG 24695 / JCM 21032 / LMG 3331 / NBRC 15819 / NCTC 12168 / Alc 37) (Ochrobactrum anthropi).